The following is a 366-amino-acid chain: MMDEQGLDGMQILPGSQDSFSELWASVQTPSIATIAEEFDDHLGNLLQNGFDMNLFELPPEMVAKDSVTPPSSTVPVVTDYPGEYGFQLRFQKSGTAKSVTSTFSELLKKLYCQLAKTSPVEVLLSKEPPQGAVLRATAVYKKTEHVADVVRRCPHHQTEDTAEHRSHLIRLEGSQRALYFEDPHTKRQSVTVPYEPPQLGSETTAILLSFMCNSSCMGGMNRRQILTILTLETPDGLVLGRRCFEVRVCACPGRDRKTDEESSTKTPNGPKQTKKRKQAPSNSAPHTTTVMKSKSSSSAEEEDKEVFTVLVKGRERYEIIKKINEAFEGAAEKEKAKNKVAVKQELPVPSSGKRLVQRGERSDSD.

The interval 1 to 41 (MMDEQGLDGMQILPGSQDSFSELWASVQTPSIATIAEEFDD) is transcription activation (acidic). The DNA-binding element occupies 80 to 267 (DYPGEYGFQL…KTDEESSTKT (188 aa)). 4 residues coordinate Zn(2+): Cys-154, His-157, Cys-213, and Cys-217. The tract at residues 248–255 (RVCACPGR) is interaction with DNA. Positions 255-264 (RDRKTDEESS) are enriched in basic and acidic residues. Positions 255-305 (RDRKTDEESSTKTPNGPKQTKKRKQAPSNSAPHTTTVMKSKSSSSAEEEDK) are disordered. Positions 275–295 (KKRKQAPSNSAPHTTTVMKSK) match the Bipartite nuclear localization signal motif. Positions 280–292 (APSNSAPHTTTVM) are enriched in polar residues. Positions 305–336 (KEVFTVLVKGRERYEIIKKINEAFEGAAEKEK) are oligomerization. Positions 319-330 (EIIKKINEAFEG) match the Nuclear export signal motif. The disordered stretch occupies residues 332–366 (AEKEKAKNKVAVKQELPVPSSGKRLVQRGERSDSD). The segment at 341 to 362 (VAVKQELPVPSSGKRLVQRGER) is basic (repression of DNA-binding).

The protein belongs to the p53 family. In terms of assembly, binds DNA as a homotetramer. The cofactor is Zn(2+).

The protein resides in the cytoplasm. Its subcellular location is the nucleus. Its function is as follows. Multifunctional transcription factor that induces cell cycle arrest, DNA repair or apoptosis upon binding to its target DNA sequence. Acts as a tumor suppressor in many tumor types; induces growth arrest or apoptosis depending on the physiological circumstances and cell type. Negatively regulates cell division by controlling expression of a set of genes required for this process. One of the activated genes is an inhibitor of cyclin-dependent kinases. Apoptosis induction seems to be mediated either by stimulation of BAX and FAS antigen expression, or by repression of Bcl-2 expression. The protein is Cellular tumor antigen p53 (tp53) of Platichthys flesus (European flounder).